We begin with the raw amino-acid sequence, 389 residues long: POU domain, class 5, transcription factor 3 (389 aa).

2 stretches are compositionally biased toward low complexity: residues 1-18 (MFSP…LLPD) and 145-165 (LANL…GHSS). Disordered regions lie at residues 1–88 (MFSP…APPA) and 145–177 (LANL…TSEE). Positions 167 to 177 (SGDEDAPTSEE) are enriched in acidic residues. One can recognise a POU-specific domain in the interval 170–244 (EDAPTSEELE…LLQRWLNEAE (75 aa)). The segment at residues 264–323 (KRKRRTSIETNVKGTLESFFRKCVKPSPQEISQIAEDLNLDKDVVRVWFCNRRQKGKRLL) is a DNA-binding region (homeobox).

The protein belongs to the POU transcription factor family.

It is found in the nucleus. Functionally, required for the maintenance of pluripotency and self-renewal of embryonic stem cells. Transcriptional activator that binds the DNA consensus sequence 5'-ATGCAAAT-3'. The chain is POU domain, class 5, transcription factor 3 (POU5F3) from Gallus gallus (Chicken).